We begin with the raw amino-acid sequence, 195 residues long: AP-4-A phosphorylase (195 aa).

Residues 1–17 show a composition bias toward basic and acidic residues; it reads MSDEDRTDRATEDHTIF. Positions 1 to 20 are disordered; it reads MSDEDRTDRATEDHTIFDRG. One can recognise an HIT domain in the interval 57–166; that stretch reads PFTEIPQLSD…VPRWGGDANF (110 aa). The short motif at 151–155 is the Histidine triad motif element; sequence HLHVH. Residue His153 is the Tele-AMP-histidine intermediate of the active site.

In terms of assembly, homotetramer. A divalent metal cation is required as a cofactor.

The catalysed reaction is ADP + ATP + H(+) = P(1),P(4)-bis(5'-adenosyl) tetraphosphate + phosphate. Functionally, catabolizes diadenosine 5',5'''-P1,P4-tetraphosphate (Ap4A) into ADP and ATP. This is AP-4-A phosphorylase from Mycobacterium tuberculosis (strain CDC 1551 / Oshkosh).